Consider the following 55-residue polypeptide: uncharacterized protein (55 aa).

This is an uncharacterized protein from Escherichia coli (Bacteriophage T4).